The sequence spans 340 residues: Ketol-acid reductoisomerase (NADP(+)) (340 aa).

The KARI N-terminal Rossmann domain maps to 3-183 (INVFYDKDCN…GGGRTGIIET (181 aa)). NADP(+) is bound by residues 26–29 (FGSQ), Arg49, Ser54, and 84–87 (DENQ). Residue His109 is part of the active site. Gly135 provides a ligand contact to NADP(+). Residues 184–329 (TFKDETETDL…VKLRNMMPWI (146 aa)) enclose the KARI C-terminal knotted domain. 4 residues coordinate Mg(2+): Asp192, Glu196, Glu228, and Glu232. Substrate is bound at residue Ser253.

The protein belongs to the ketol-acid reductoisomerase family. It depends on Mg(2+) as a cofactor.

The enzyme catalyses (2R)-2,3-dihydroxy-3-methylbutanoate + NADP(+) = (2S)-2-acetolactate + NADPH + H(+). It carries out the reaction (2R,3R)-2,3-dihydroxy-3-methylpentanoate + NADP(+) = (S)-2-ethyl-2-hydroxy-3-oxobutanoate + NADPH + H(+). It participates in amino-acid biosynthesis; L-isoleucine biosynthesis; L-isoleucine from 2-oxobutanoate: step 2/4. The protein operates within amino-acid biosynthesis; L-valine biosynthesis; L-valine from pyruvate: step 2/4. In terms of biological role, involved in the biosynthesis of branched-chain amino acids (BCAA). Catalyzes an alkyl-migration followed by a ketol-acid reduction of (S)-2-acetolactate (S2AL) to yield (R)-2,3-dihydroxy-isovalerate. In the isomerase reaction, S2AL is rearranged via a Mg-dependent methyl migration to produce 3-hydroxy-3-methyl-2-ketobutyrate (HMKB). In the reductase reaction, this 2-ketoacid undergoes a metal-dependent reduction by NADPH to yield (R)-2,3-dihydroxy-isovalerate. The chain is Ketol-acid reductoisomerase (NADP(+)) from Aliarcobacter butzleri (strain RM4018) (Arcobacter butzleri).